The sequence spans 316 residues: tRNA dimethylallyltransferase (316 aa).

An ATP-binding site is contributed by 17–24 (GPTASGKT). 19-24 (TASGKT) is a substrate binding site. Interaction with substrate tRNA regions lie at residues 42–45 (DSAL), 166–170 (QRLSR), and 247–252 (RCVGYR).

The protein belongs to the IPP transferase family. Monomer. Mg(2+) is required as a cofactor.

The catalysed reaction is adenosine(37) in tRNA + dimethylallyl diphosphate = N(6)-dimethylallyladenosine(37) in tRNA + diphosphate. Catalyzes the transfer of a dimethylallyl group onto the adenine at position 37 in tRNAs that read codons beginning with uridine, leading to the formation of N6-(dimethylallyl)adenosine (i(6)A). This is tRNA dimethylallyltransferase from Klebsiella pneumoniae (strain 342).